Here is a 503-residue protein sequence, read N- to C-terminus: Transcriptional regulator LovE (503 aa).

The segment covering Met-1 to Leu-14 has biased composition (polar residues). A disordered region spans residues Met-1 to Arg-21. The segment at residues Cys-35–Cys-67 is a DNA-binding region (zn(2)-C6 fungal-type). Disordered stretches follow at residues Ala-89–Leu-124 and Ser-331–Pro-362. The span at Ser-339–Thr-349 shows a compositional bias: basic and acidic residues. Polar residues predominate over residues Ser-350 to Asp-359.

It localises to the nucleus. In terms of biological role, transcription factor that regulates the expression of the he gene cluster that mediates the biosynthesis of lovastatin (also known as mevinolin, mevacor or monacolin K), a hypolipidemic inhibitor of (3S)-hydroxymethylglutaryl-coenzyme A (HMG-CoA) reductase (HMGR). In Aspergillus terreus (strain NIH 2624 / FGSC A1156), this protein is Transcriptional regulator LovE.